The chain runs to 112 residues: MLDFLRVTGLFFVTAVAEIVGCYLPWLVLTQGRSAWLLVPAAASLAVFAWLLTLHPSAAGRTYAAYGGVYVVVALLWLWRVDGVVPTRWDLVGGAICLAGMAIIALQPRAAS.

4 helical membrane passes run 9-29 (GLFFVTAVAEIVGCYLPWLVL), 34-54 (SAWLLVPAAASLAVFAWLLTL), 65-85 (AYGGVYVVVALLWLWRVDGVV), and 91-111 (LVGGAICLAGMAIIALQPRAA).

Belongs to the UPF0060 family.

The protein localises to the cell inner membrane. The polypeptide is UPF0060 membrane protein Mpe_A1656 (Methylibium petroleiphilum (strain ATCC BAA-1232 / LMG 22953 / PM1)).